A 237-amino-acid polypeptide reads, in one-letter code: Phosphoribosylaminoimidazole-succinocarboxamide synthase (237 aa).

This sequence belongs to the SAICAR synthetase family.

The catalysed reaction is 5-amino-1-(5-phospho-D-ribosyl)imidazole-4-carboxylate + L-aspartate + ATP = (2S)-2-[5-amino-1-(5-phospho-beta-D-ribosyl)imidazole-4-carboxamido]succinate + ADP + phosphate + 2 H(+). It functions in the pathway purine metabolism; IMP biosynthesis via de novo pathway; 5-amino-1-(5-phospho-D-ribosyl)imidazole-4-carboxamide from 5-amino-1-(5-phospho-D-ribosyl)imidazole-4-carboxylate: step 1/2. The sequence is that of Phosphoribosylaminoimidazole-succinocarboxamide synthase from Listeria welshimeri serovar 6b (strain ATCC 35897 / DSM 20650 / CCUG 15529 / CIP 8149 / NCTC 11857 / SLCC 5334 / V8).